Consider the following 323-residue polypeptide: Glyoxylate/hydroxypyruvate reductase B (323 aa).

Positions 37-62 (AEHGGAGARRRHDRLQQHGGSSAAGE) are disordered. Residues Arg-236 and Glu-265 contribute to the active site. Catalysis depends on His-284, which acts as the Proton donor.

This sequence belongs to the D-isomer specific 2-hydroxyacid dehydrogenase family. GhrB subfamily. Homodimer.

It is found in the cytoplasm. The catalysed reaction is glycolate + NADP(+) = glyoxylate + NADPH + H(+). It catalyses the reaction (R)-glycerate + NAD(+) = 3-hydroxypyruvate + NADH + H(+). The enzyme catalyses (R)-glycerate + NADP(+) = 3-hydroxypyruvate + NADPH + H(+). Its function is as follows. Catalyzes the NADPH-dependent reduction of glyoxylate and hydroxypyruvate into glycolate and glycerate, respectively. This is Glyoxylate/hydroxypyruvate reductase B (tkrA) from Enterobacter agglomerans (Erwinia herbicola).